The following is a 476-amino-acid chain: Serine/threonine-protein kinase Chk1 (476 aa).

The interval 1–265 (MAVPFVEDWD…IPDIKKDRWY (265 aa)) is interaction with CLSPN. Residues 9–265 (WDLVQTLGEG…IPDIKKDRWY (257 aa)) enclose the Protein kinase domain. ATP contacts are provided by residues 15-23 (LGEGAYGEV) and Lys-38. The active-site Proton acceptor is the Asp-130. Lys-132 is covalently cross-linked (Glycyl lysine isopeptide (Lys-Gly) (interchain with G-Cter in ubiquitin)). Residues 270 to 327 (KKGAKRPRVTSGGVSESPSGFSKHIQSNLDFSPVNSASSEENVKYSSSQPEPRTGLSL) are disordered. Ser-280, Ser-286, Ser-296, and Ser-301 each carry phosphoserine. The span at 281–320 (GGVSESPSGFSKHIQSNLDFSPVNSASSEENVKYSSSQPE) shows a compositional bias: polar residues. Ser-317 is subject to Phosphoserine; by ATM and ATR. Position 331 is a phosphoserine (Ser-331). Ser-345 carries the phosphoserine; by ATM and ATR modification. The tract at residues 391-476 (QCLKETCEKL…SSQKIWLPAT (86 aa)) is autoinhibitory region. Lys-436 participates in a covalent cross-link: Glycyl lysine isopeptide (Lys-Gly) (interchain with G-Cter in ubiquitin). Phosphoserine occurs at positions 467 and 468.

It belongs to the protein kinase superfamily. CAMK Ser/Thr protein kinase family. NIM1 subfamily. As to quaternary structure, interacts (phosphorylated by ATR) with RAD51. Interacts with and phosphorylates CLSPN, an adapter protein that regulates the ATR-dependent phosphorylation of CHEK1. Interacts with BRCA1. Interacts with and phosphorylates CDC25A, CDC25B and CDC25C. Interacts with FBXO6, which regulates CHEK1. Interacts with PPM1D, which regulates CHEK1 through dephosphorylation. Interacts with TIMELESS; DNA damage-dependent. Interacts with FEM1B; activates CHEK1 in response to stress. Interacts with TLK1. Interacts with XPO1 and YWHAZ. Interacts with CDK5RAP3; antagonizes CHEK1. In terms of assembly, isoform 1 associates with isoform 2, the interaction is disrupted upon phosphorylation by ATR. Post-translationally, phosphorylated by ATR in a RAD17-dependent manner in response to ultraviolet irradiation and inhibition of DNA replication. Phosphorylated by ATM in response to ionizing irradiation. ATM and ATR can both phosphorylate Ser-317 and Ser-345 and this results in enhanced kinase activity. Phosphorylation at Ser-345 induces a change in the conformation of the protein, activates the kinase activity and is a prerequisite for interaction with FBXO6 and subsequent ubiquitination at Lys-436. Phosphorylation at Ser-345 also increases binding to 14-3-3 proteins and promotes nuclear retention. Conversely, dephosphorylation at Ser-345 by PPM1D may contribute to exit from checkpoint mediated cell cycle arrest. Phosphorylation at Ser-280 by AKT1/PKB, may promote mono and/or diubiquitination. Also phosphorylated at undefined residues during mitotic arrest, resulting in decreased activity. In terms of processing, ubiquitinated. Mono or diubiquitination promotes nuclear exclusion. The activated form (phosphorylated on Ser-345) is polyubiquitinated at Lys-436 by some SCF-type E3 ubiquitin ligase complex containing FBXO6 promoting its degradation. Ubiquitination and degradation are required to terminate the checkpoint and ensure that activated CHEK1 does not accumulate as cells progress through S phase, when replication forks encounter transient impediments during normal DNA replication. 'Lys-63'-mediated ubiquitination by TRAF4 at Lys-132 activates cell cycle arrest and activation of DNA repair. Proteolytically cleaved at the C-terminus by SPRTN during normal DNA replication, thereby promoting CHEK1 removal from chromatin and activating the protein kinase activity. In terms of tissue distribution, expressed ubiquitously with the most abundant expression in thymus, testis, small intestine and colon.

It localises to the nucleus. Its subcellular location is the chromosome. The protein localises to the cytoplasm. It is found in the cytoskeleton. The protein resides in the microtubule organizing center. It localises to the centrosome. The catalysed reaction is L-seryl-[protein] + ATP = O-phospho-L-seryl-[protein] + ADP + H(+). It catalyses the reaction L-threonyl-[protein] + ATP = O-phospho-L-threonyl-[protein] + ADP + H(+). Its activity is regulated as follows. Activated through phosphorylation predominantly by ATR but also by ATM in response to DNA damage or inhibition of DNA replication. Activation is modulated by several mediators including CLSPN, BRCA1 and FEM1B. Proteolytic cleavage at the C-terminus by SPRTN during normal DNA replication activates the protein kinase activity. Functionally, serine/threonine-protein kinase which is required for checkpoint-mediated cell cycle arrest and activation of DNA repair in response to the presence of DNA damage or unreplicated DNA. May also negatively regulate cell cycle progression during unperturbed cell cycles. This regulation is achieved by a number of mechanisms that together help to preserve the integrity of the genome. Recognizes the substrate consensus sequence [R-X-X-S/T]. Binds to and phosphorylates CDC25A, CDC25B and CDC25C. Phosphorylation of CDC25A at 'Ser-178' and 'Thr-507' and phosphorylation of CDC25C at 'Ser-216' creates binding sites for 14-3-3 proteins which inhibit CDC25A and CDC25C. Phosphorylation of CDC25A at 'Ser-76', 'Ser-124', 'Ser-178', 'Ser-279' and 'Ser-293' promotes proteolysis of CDC25A. Phosphorylation of CDC25A at 'Ser-76' primes the protein for subsequent phosphorylation at 'Ser-79', 'Ser-82' and 'Ser-88' by NEK11, which is required for polyubiquitination and degradation of CDCD25A. Inhibition of CDC25 leads to increased inhibitory tyrosine phosphorylation of CDK-cyclin complexes and blocks cell cycle progression. Also phosphorylates NEK6. Binds to and phosphorylates RAD51 at 'Thr-309', which promotes the release of RAD51 from BRCA2 and enhances the association of RAD51 with chromatin, thereby promoting DNA repair by homologous recombination. Phosphorylates multiple sites within the C-terminus of TP53, which promotes activation of TP53 by acetylation and promotes cell cycle arrest and suppression of cellular proliferation. Also promotes repair of DNA cross-links through phosphorylation of FANCE. Binds to and phosphorylates TLK1 at 'Ser-743', which prevents the TLK1-dependent phosphorylation of the chromatin assembly factor ASF1A. This may enhance chromatin assembly both in the presence or absence of DNA damage. May also play a role in replication fork maintenance through regulation of PCNA. May regulate the transcription of genes that regulate cell-cycle progression through the phosphorylation of histones. Phosphorylates histone H3.1 (to form H3T11ph), which leads to epigenetic inhibition of a subset of genes. May also phosphorylate RB1 to promote its interaction with the E2F family of transcription factors and subsequent cell cycle arrest. Phosphorylates SPRTN, promoting SPRTN recruitment to chromatin. Reduces replication stress and activates the G2/M checkpoint, by phosphorylating and inactivating PABIR1/FAM122A and promoting the serine/threonine-protein phosphatase 2A-mediated dephosphorylation and stabilization of WEE1 levels and activity. Endogenous repressor of isoform 1, interacts with, and antagonizes CHK1 to promote the S to G2/M phase transition. The sequence is that of Serine/threonine-protein kinase Chk1 (CHEK1) from Homo sapiens (Human).